Here is a 1083-residue protein sequence, read N- to C-terminus: Ubiquitin-protein ligase E3C (1083 aa).

Basic and acidic residues-rich tracts occupy residues 1–10 and 20–40; these read MFSFEGDFKT and SRKE…RKRE. The interval 1-40 is disordered; the sequence is MFSFEGDFKTRPKVSLGGASRKEEKASLLHRTQEERRKRE. A cis-determinant of acceptor ubiquitin-binding region spans residues 1–60; that stretch reads MFSFEGDFKTRPKVSLGGASRKEEKASLLHRTQEERRKREEERRRLKNAIIIQSFIRGYR. The IQ domain occupies 45-74; that stretch reads RLKNAIIIQSFIRGYRDRKQQYSIQRSAFD. The disordered stretch occupies residues 355 to 385; that stretch reads SPASASCHDSASDSEEESEEADKPSSPEDGR. Basic and acidic residues predominate over residues 375–385; that stretch reads ADKPSSPEDGR. Positions 744–1083 constitute an HECT domain; it reads NEPDLKKRIR…IECAAGFELS (340 aa). A Glycyl lysine isopeptide (Lys-Gly) (interchain with G-Cter in ubiquitin); by autocatalysis cross-link involves residue lysine 903. The active-site Glycyl thioester intermediate is the cysteine 1051.

This sequence belongs to the UBE3C family. Interacts with 26S proteasomes. Interacts (via the HECT domain) with UBE2D1 and, less efficiently, with UBE2L3. Autoubiquitinated; promoting its own degradation. Highly expressed in skeletal muscle. Detected at much lower levels in kidney and pancreas.

The catalysed reaction is S-ubiquitinyl-[E2 ubiquitin-conjugating enzyme]-L-cysteine + [acceptor protein]-L-lysine = [E2 ubiquitin-conjugating enzyme]-L-cysteine + N(6)-ubiquitinyl-[acceptor protein]-L-lysine.. Its pathway is protein modification; protein ubiquitination. In terms of biological role, E3 ubiquitin-protein ligase that specifically catalyzes 'Lys-29'- and 'Lys-48'-linked polyubiquitin chains. Accepts ubiquitin from the E2 ubiquitin-conjugating enzyme UBE2D1 in the form of a thioester and then directly transfers the ubiquitin to targeted substrates. Associates with the proteasome and promotes elongation of ubiquitin chains on substrates bound to the 26S proteasome. Also catalyzes 'Lys-29'- and 'Lys-48'-linked ubiquitination of 26S proteasome subunit ADRM1/RPN13 in response to proteotoxic stress, impairing the ability of the proteasome to bind and degrade ubiquitin-conjugated proteins. Acts as a negative regulator of autophagy by mediating 'Lys-29'- and 'Lys-48'-linked ubiquitination of PIK3C3/VPS34, promoting its degradation. Can assemble unanchored poly-ubiquitin chains in either 'Lys-29'- or 'Lys-48'-linked polyubiquitin chains; with some preference for 'Lys-48' linkages. Acts as a negative regulator of type I interferon by mediating 'Lys-48'-linked ubiquitination of IRF3 and IRF7, leading to their degradation by the proteasome. Catalyzes ubiquitination and degradation of CAND2. The polypeptide is Ubiquitin-protein ligase E3C (Homo sapiens (Human)).